A 187-amino-acid polypeptide reads, in one-letter code: Oligoribonuclease (187 aa).

In terms of domain architecture, Exonuclease spans 7-170 (LIWIDLEMTG…DDIKDSINEL (164 aa)). The active site involves Tyr-128.

The protein belongs to the oligoribonuclease family.

The protein resides in the cytoplasm. 3'-to-5' exoribonuclease specific for small oligoribonucleotides. The protein is Oligoribonuclease of Legionella pneumophila (strain Paris).